The following is a 709-amino-acid chain: Elongation factor G (709 aa).

Positions 9–292 (AYYRNIGISA…AVVEYLPSPT (284 aa)) constitute a tr-type G domain. GTP is bound by residues 18-25 (AHIDAGKT), 89-93 (DTPGH), and 143-146 (NKMD).

It belongs to the TRAFAC class translation factor GTPase superfamily. Classic translation factor GTPase family. EF-G/EF-2 subfamily.

It localises to the cytoplasm. Its function is as follows. Catalyzes the GTP-dependent ribosomal translocation step during translation elongation. During this step, the ribosome changes from the pre-translocational (PRE) to the post-translocational (POST) state as the newly formed A-site-bound peptidyl-tRNA and P-site-bound deacylated tRNA move to the P and E sites, respectively. Catalyzes the coordinated movement of the two tRNA molecules, the mRNA and conformational changes in the ribosome. The chain is Elongation factor G from Blochmanniella floridana.